Consider the following 430-residue polypeptide: 3-phosphoshikimate 1-carboxyvinyltransferase (430 aa).

Lysine 33, serine 34, and arginine 38 together coordinate 3-phosphoshikimate. Lysine 33 lines the phosphoenolpyruvate pocket. Glycine 101 and arginine 129 together coordinate phosphoenolpyruvate. Serine 172, serine 173, glutamine 174, serine 201, glutamate 319, and histidine 346 together coordinate 3-phosphoshikimate. Glutamine 174 is a phosphoenolpyruvate binding site. Glutamate 319 (proton acceptor) is an active-site residue. Residues arginine 350, arginine 391, and lysine 416 each contribute to the phosphoenolpyruvate site.

It belongs to the EPSP synthase family. In terms of assembly, monomer.

The protein localises to the cytoplasm. It carries out the reaction 3-phosphoshikimate + phosphoenolpyruvate = 5-O-(1-carboxyvinyl)-3-phosphoshikimate + phosphate. Its pathway is metabolic intermediate biosynthesis; chorismate biosynthesis; chorismate from D-erythrose 4-phosphate and phosphoenolpyruvate: step 6/7. Catalyzes the transfer of the enolpyruvyl moiety of phosphoenolpyruvate (PEP) to the 5-hydroxyl of shikimate-3-phosphate (S3P) to produce enolpyruvyl shikimate-3-phosphate and inorganic phosphate. In Corynebacterium glutamicum (strain R), this protein is 3-phosphoshikimate 1-carboxyvinyltransferase.